Reading from the N-terminus, the 130-residue chain is Large ribosomal subunit protein bL19 (130 aa).

It belongs to the bacterial ribosomal protein bL19 family.

This protein is located at the 30S-50S ribosomal subunit interface and may play a role in the structure and function of the aminoacyl-tRNA binding site. This chain is Large ribosomal subunit protein bL19, found in Mycoplasma capricolum subsp. capricolum (strain California kid / ATCC 27343 / NCTC 10154).